The primary structure comprises 307 residues: MEFVFLGTGAGVPSKGRNVSAIALQLLEERGQTWLFDCGEATQHQILHTSVRPRRIEKIFITHLHGDHIFGLPGLLGSRSFQGGTTPLTVYGPKGIKQFIEVALSVSTTHVKYPLEIVEITEEGTVFEDNEFHVETKRLSHGIECFGYRIIEKDIQGALLVDKLLEMGVKPGPLFKRLKDGEVVELENGTILNGQDFIGPPQKGRIITILGDTRFCEASRELAQDADVLVHEATFAAEDEQQAYDYFHSTSKQAASIALQANAKRLILTHISSRYQGDTYKELLKEARELFSNTEIATDLKSFPVER.

Zn(2+) is bound by residues H63, H65, D67, H68, H141, D212, and H270. D67 serves as the catalytic Proton acceptor.

The protein belongs to the RNase Z family. In terms of assembly, homodimer. The cofactor is Zn(2+).

The catalysed reaction is Endonucleolytic cleavage of RNA, removing extra 3' nucleotides from tRNA precursor, generating 3' termini of tRNAs. A 3'-hydroxy group is left at the tRNA terminus and a 5'-phosphoryl group is left at the trailer molecule.. In terms of biological role, zinc phosphodiesterase, which displays some tRNA 3'-processing endonuclease activity. Probably involved in tRNA maturation, by removing a 3'-trailer from precursor tRNA. The protein is Ribonuclease Z of Bacillus cereus (strain ATCC 10987 / NRS 248).